A 334-amino-acid chain; its full sequence is MSDLYKKHFLKLLDFTPAQFTSLLTLAAQLKADKKNGKEVQKLTGKNIALIFEKDSTRTRCSFEVAAFDQGARVTYLGPSGSQIGHKESIKDTARVLGRMYDGIQYRGHGQEVVETLAQYAGVPVWNGLTNEFHPTQLLADLMTMQEHLPGKAFNEMTLVYAGDARNNMGNSMLEAAALTGLDLRLLAPKACWPEESLVAECSALAEKHGGKITLTEDVAAGVKGADFIYTDVWVSMGEAKEKWAERIALLRGYQVNAQMMALTDNPNVKFLHCLPAFHDDQTTLGKQMAKEFDLHGGMEVTDEVFESAASIVFDQAENRMHTIKAVMMATLGE.

Residues 56–59 (STRT), Gln-83, Arg-107, and 134–137 (HPTQ) each bind carbamoyl phosphate. L-ornithine is bound by residues Asn-168, Asp-232, and 236 to 237 (SM). Residues 274–275 (CL) and Arg-320 contribute to the carbamoyl phosphate site.

It belongs to the aspartate/ornithine carbamoyltransferase superfamily. OTCase family. In terms of assembly, in E.coli strain K12, trimer of identical or non-identical chains are composed of ArgI (I) and/or ArgF (F). The trimer has the following composition: FFI, FFF, FII, III. E.coli strains B and W, which are known to contain only ArgI, produce only a trimer of identical chains (III).

It is found in the cytoplasm. It catalyses the reaction carbamoyl phosphate + L-ornithine = L-citrulline + phosphate + H(+). Its pathway is amino-acid biosynthesis; L-arginine biosynthesis; L-arginine from L-ornithine and carbamoyl phosphate: step 1/3. Its function is as follows. Reversibly catalyzes the transfer of the carbamoyl group from carbamoyl phosphate (CP) to the N(epsilon) atom of ornithine (ORN) to produce L-citrulline, which is a substrate for argininosuccinate synthetase, the enzyme involved in the final step in arginine biosynthesis. This chain is Ornithine carbamoyltransferase subunit F, found in Escherichia coli (strain K12).